Here is a 204-residue protein sequence, read N- to C-terminus: Translation initiation factor 2 subunit beta (204 aa).

The 59-residue stretch at 146–204 folds into the TRAM domain; sequence AIEEGKELEVHIESISKKGDGVARIGKYILYVAGTKAGQNVKVRITRISGQVAFTQKIL.

It belongs to the eIF-2-beta/eIF-5 family. In terms of assembly, heterotrimer composed of an alpha, a beta and a gamma chain.

In terms of biological role, eIF-2 functions in the early steps of protein synthesis by forming a ternary complex with GTP and initiator tRNA. The sequence is that of Translation initiation factor 2 subunit beta from Methanocorpusculum labreanum (strain ATCC 43576 / DSM 4855 / Z).